The sequence spans 178 residues: ATP synthase subunit b, chloroplastic (178 aa).

Residues 26-46 (TNLINIIILLIILFYFLKGLL) form a helical membrane-spanning segment.

Belongs to the ATPase B chain family. In terms of assembly, F-type ATPases have 2 components, F(1) - the catalytic core - and F(0) - the membrane proton channel. F(1) has five subunits: alpha(3), beta(3), gamma(1), delta(1), epsilon(1). F(0) has four main subunits: a(1), b(1), b'(1) and c(10-14). The alpha and beta chains form an alternating ring which encloses part of the gamma chain. F(1) is attached to F(0) by a central stalk formed by the gamma and epsilon chains, while a peripheral stalk is formed by the delta, b and b' chains.

It is found in the plastid. It localises to the chloroplast thylakoid membrane. Functionally, f(1)F(0) ATP synthase produces ATP from ADP in the presence of a proton or sodium gradient. F-type ATPases consist of two structural domains, F(1) containing the extramembraneous catalytic core and F(0) containing the membrane proton channel, linked together by a central stalk and a peripheral stalk. During catalysis, ATP synthesis in the catalytic domain of F(1) is coupled via a rotary mechanism of the central stalk subunits to proton translocation. Its function is as follows. Component of the F(0) channel, it forms part of the peripheral stalk, linking F(1) to F(0). The chain is ATP synthase subunit b, chloroplastic from Vaucheria litorea (Yellow-green alga).